Here is a 727-residue protein sequence, read N- to C-terminus: NADH-ubiquinone oxidoreductase 75 kDa subunit, mitochondrial (727 aa).

The N-terminal 23 residues, 1–23, are a transit peptide targeting the mitochondrion; that stretch reads MLRIPVRKALVGLSKSPKGCVRT. One can recognise a 2Fe-2S ferredoxin-type domain in the interval 30-108; that stretch reads NLIEVFVDGQ…GWNILTNSEK (79 aa). [2Fe-2S] cluster is bound by residues Cys-64, Cys-75, and Cys-78. N6-acetyllysine is present on Lys-84. Position 92 (Cys-92) interacts with [2Fe-2S] cluster. The region spanning 108–147 is the 4Fe-4S His(Cys)3-ligated-type domain; it reads KSKKAREGVMEFLLANHPLDCPICDQGGECDLQDQSMMFG. [4Fe-4S] cluster-binding residues include His-124, Cys-128, Cys-131, Cys-137, Cys-176, Cys-179, Cys-182, and Cys-226. Positions 245 to 301 constitute a 4Fe-4S Mo/W bis-MGD-type domain; it reads TRKTESIDVMDAVGSNIVVSTRTGEVMRILPRMHEDINEEWISDKTRFAYDGLKRQR. 3 positions are modified to N6-acetyllysine: Lys-467, Lys-499, and Lys-709.

It belongs to the complex I 75 kDa subunit family. As to quaternary structure, core subunit of respiratory chain NADH dehydrogenase (Complex I) which is composed of 45 different subunits. This is the largest subunit of complex I and it is a component of the iron-sulfur (IP) fragment of the enzyme. Complex I associates with ubiquinol-cytochrome reductase complex (Complex III) to form supercomplexes. Interacts with MDM2 and AKAP1. [2Fe-2S] cluster serves as cofactor. [4Fe-4S] cluster is required as a cofactor.

The protein resides in the mitochondrion inner membrane. It catalyses the reaction a ubiquinone + NADH + 5 H(+)(in) = a ubiquinol + NAD(+) + 4 H(+)(out). In terms of biological role, core subunit of the mitochondrial membrane respiratory chain NADH dehydrogenase (Complex I) which catalyzes electron transfer from NADH through the respiratory chain, using ubiquinone as an electron acceptor. Essential for catalysing the entry and efficient transfer of electrons within complex I. Plays a key role in the assembly and stability of complex I and participates in the association of complex I with ubiquinol-cytochrome reductase complex (Complex III) to form supercomplexes. This is NADH-ubiquinone oxidoreductase 75 kDa subunit, mitochondrial (NDUFS1) from Macaca fascicularis (Crab-eating macaque).